Reading from the N-terminus, the 131-residue chain is Profilin-5 (131 aa).

This sequence belongs to the profilin family. In terms of assembly, occurs in many kinds of cells as a complex with monomeric actin in a 1:1 ratio.

The protein resides in the cytoplasm. Its subcellular location is the cytoskeleton. Functionally, binds to actin and affects the structure of the cytoskeleton. At high concentrations, profilin prevents the polymerization of actin, whereas it enhances it at low concentrations. By binding to PIP2, it inhibits the formation of IP3 and DG. In Hevea brasiliensis (Para rubber tree), this protein is Profilin-5.